Consider the following 170-residue polypeptide: Adenine phosphoribosyltransferase (170 aa).

This sequence belongs to the purine/pyrimidine phosphoribosyltransferase family. In terms of assembly, homodimer.

Its subcellular location is the cytoplasm. The catalysed reaction is AMP + diphosphate = 5-phospho-alpha-D-ribose 1-diphosphate + adenine. Its pathway is purine metabolism; AMP biosynthesis via salvage pathway; AMP from adenine: step 1/1. In terms of biological role, catalyzes a salvage reaction resulting in the formation of AMP, that is energically less costly than de novo synthesis. The sequence is that of Adenine phosphoribosyltransferase from Thermosynechococcus vestitus (strain NIES-2133 / IAM M-273 / BP-1).